We begin with the raw amino-acid sequence, 2357 residues long: MQPPPQTVPSGMAGPPPAGNPRSVFWASSPYRRRANNNAAVAPTTCPLQPVTDPFAFSRQALQSTPLGSSSKSSPPVLQGPAPAGFSQHPGLLVPHTHARDSSQGPCEPLPGPLTQPRAHASPFSGALTPSAPPGPEMNRSAEVGPSSEPEVQTLPYLPHYIPGVDPETSHGGHPHGNMPGLDRPLSRQNPHDGVVTPAASPSLPQPGLQMPGQWGPVQGGPQPSGQHRSPCPEGPVPSGVPCATSVPHFPTPSILHQGPGHEQHSPLVAPPAALPSDGRDEVSHLQSGSHLANNSDPESTFRQNPRIVNHWASPELRQNPGVKNEHRPASALVNPLARGDSPENRTHHPLGAGAGSGCAPLEADSGASGALAMFFQGGETENEENLSSEKAGLSGQADFDDFCSSPGLGRPPAPTHVGAGSLCQALLPGPSNEAAGDVWGDTASTGVPDASGSQYENVENLEFVQNQEVLPSEPLNLDPSSPSDQFRYGPLPGPAVPRHGAVCHTGAPDATLHTVHPDSVSSSYSSRSHGRLSGSARPQELVGTFIQQEVGKPEDEASGSFFKQIDSSPVGGETDETTVSQNYRGSVSQPSTPSPPKPTGIFQTSANSSFEPVKSHLVGVKPFEADRANVVGEVRETCVRQKQCRPAAALPDASPGNLEQPPDNMETLCAPQVCPLPLNSTTEAVHMLPHAGAPPLDTVYPAPEKRPSARTQGPVKCESPATTLWAQSELPDFGGNVLLAPAAPALYVCAKPQPPVVQPPEEAMSGQQSRNPSSAAPVQSRGGIGASENLENPPKMGEEEALQSQASSGYASLLSSPPTESLQNPPVLIAQPDHSYNLAQPINFSVSLSNSHEKNQSWREALVGDRPAVSSWALGGDSGENTSLSGIPTSSVLSLSLPSSVAQSNFPQGSGASEMVSNQPANLLVQPPSQPVPENLVPESQKDRKAGSALPGFANSPAGSTSVVLVPPAHGTLVPDGNKANHSSHQEDTYGALDFTLSRTLENPVNVYNPSHSDSLASQQSVASHPRQSGPGAPNLDRFYQQVTKDAQGQPGLERAQQELVPPQQQASPPQLPKAMFSELSNPESLPAQGQAQNSAQSPASLVLVDAGQQLPPRPPQSSSVSLVSSGSGQAAVPSEQPWPQPVPALAPGPPPQDLAAYYYYRPLYDAYQPQYSLPYPPEPGAASLYYQDVYSLYEPRYRPYDGAASAYAQNYRYPEPERPSSRASHSSERPPPRQGYPEGYYSSKSGWSSQSDYYASYYSSQYDYGDPGHWDRYHYSARVRDPRTYDRRYWCDAEYDAYRREHSAFGDRPEKRDNNWRYDPRFTGSFDDDPDPHRDPYGEEVDRRSVHSEHSARSLHSAHSLASRRSSLSSHSHQSQIYRSHNVAAGSYEAPLPPGSFHGDFAYGTYRSNFSSGPGFPEYGYPADTVWPAMEQVSSRPTSPEKFSVPHVCARFGPGGQLIKVIPNLPSEGQPALVEVHSMEALLQHTSEQEEMRAFPGPLAKDDTHKVDVINFAQNKAMKCLQNENLIDKESASLLWNFIVLLCRQNGTVVGTDIAELLLRDHRTVWLPGKSPNEANLIDFTNEAVEQVEEEESGEAQLSFLTGGPAAAASSLERETERFRELLLYGRKKDALESAMKNGLWGHALLLASKMDSRTHARVMTRFANSLPINDPLQTVYQLMSGRMPAASTCCGDEKWGDWRPHLAMVLSNLNNNMDVESRTMATMGDTLASRGLLDAAHFCYLMAQAGFGVYTKKTTKLVLIGSNHSLPFLKFATNEAIQRTEAYEYAQSLGAETCPLPSFQVFKFIYSCRLAEMGLATQAFHYCEAIAKSILTQPHLYSPVLISQLVQMASQLRLFDPQLKEKPEEESLAAPTWLVHLQQVERQIKEGAGVWHQDGALPQQCPGTPSSEMEQLDRPGLSQPGALGIANPLLAVPAPSPEHSSPSVRLLPSAPQTLPDGPLASPARVPMFPVPLPPGPLEPGPGCVTPGPALGFLEPSGPGLPPGVPPLQERRHLLQEARSPDPGIVPQEAPVGNSLSELSEENFDGKFANLTPSRTVPDSEAPPGWDRADSGPTQPPLSLSPAPETKRPGQAAKKETKEPKKGESWFFRWLPGKKKTEAYLPDDKNKSIVWDEKKNQWVNLNEPEEEKKAPPPPPTSMPKTVQAAPPALPGPPGAPVNMYSRRAAGTRARYVDVLNPSGTQRSEPALAPADFVAPLAPLPIPSNLFVPTPDAEEPQLPDGTGREGPAAARGLANPEPAPEPKVLSSAASLPGSELPSSRPEGSQGGELSRCSSMSSLSREVSQHFNQAPGDLPAAGGPPSGAMPFYNPAQLAQACATSGSSRLGRIGQRKHLVLN.

Disordered stretches follow at residues 1-25 (MQPPPQTVPSGMAGPPPAGNPRSVF) and 57-303 (FSRQ…STFR). Low complexity-rich tracts occupy residues 64-76 (STPLGSSSKSSPP) and 210-227 (QMPGQWGPVQGGPQPSGQ). The span at 285-303 (HLQSGSHLANNSDPESTFR) shows a compositional bias: polar residues. Phosphoserine occurs at positions 296, 314, and 331. Disordered regions lie at residues 335-359 (NPLARGDSPENRTHHPLGAGAGSGC), 508-540 (APDATLHTVHPDSVSSSYSSRSHGRLSGSARPQ), 553-603 (KPED…TGIF), 758-828 (VQPP…NPPV), 924-987 (LLVQ…SSHQ), 1006-1038 (VNVYNPSHSDSLASQQSVASHPRQSGPGAPNLD), and 1059-1151 (QELV…APGP). Residues 520-536 (SVSSSYSSRSHGRLSGS) are compositionally biased toward low complexity. Phosphoserine occurs at positions 559, 569, 587, 589, and 592. Residue Thr-593 is modified to Phosphothreonine. Ser-595 carries the post-translational modification Phosphoserine. Composition is skewed to polar residues over residues 766–778 (SGQQSRNPSSAAP) and 803–825 (LQSQASSGYASLLSSPPTESLQN). Polar residues predominate over residues 1006 to 1028 (VNVYNPSHSDSLASQQSVASHPR). Residues 1019 to 1890 (SQQSVASHPR…QQVERQIKEG (872 aa)) form a required for localization to endoplasmic reticulum exit sites region. A Phosphoserine modification is found at Ser-1069. Over residues 1080–1101 (ELSNPESLPAQGQAQNSAQSPA) the composition is skewed to polar residues. The tract at residues 1101-1400 (ASLVLVDAGQ…EAPLPPGSFH (300 aa)) is interaction with MIA3. The segment at 1102–1405 (SLVLVDAGQQ…PGSFHGDFAY (304 aa)) is required for endoplasmic reticulum localization. Residues 1118 to 1131 (QSSSVSLVSSGSGQ) show a composition bias toward low complexity. Over residues 1138–1151 (QPWPQPVPALAPGP) the composition is skewed to pro residues. Residues Ser-1207, Ser-1229, and Ser-1305 each carry the phosphoserine modification. The interval 1215–1248 (YPEPERPSSRASHSSERPPPRQGYPEGYYSSKSG) is disordered. The span at 1216-1233 (PEPERPSSRASHSSERPP) shows a compositional bias: basic and acidic residues. Residues 1307 to 1322 (FGDRPEKRDNNWRYDP) show a composition bias toward basic and acidic residues. Residues 1307–1378 (FGDRPEKRDN…SLSSHSHQSQ (72 aa)) are disordered. Thr-1325 is subject to Phosphothreonine. 9 positions are modified to phosphoserine: Ser-1327, Ser-1347, Ser-1350, Ser-1356, Ser-1359, Ser-1362, Ser-1369, Ser-1573, and Ser-1601. Residues 1333 to 1354 (DPHRDPYGEEVDRRSVHSEHSA) show a composition bias toward basic and acidic residues. A compositionally biased stretch (low complexity) spans 1356 to 1375 (SLHSAHSLASRRSSLSSHSH). The central conserved domain (CCD); mediates interaction with RNF183, LRRK2 and SEC13 stretch occupies residues 1434–1890 (QVSSRPTSPE…QQVERQIKEG (457 aa)). Phosphothreonine is present on Thr-1907. Residues Ser-1939, Ser-1964, Ser-2022, and Ser-2042 each carry the phosphoserine modification. Disordered stretches follow at residues 2049–2110 (KFAN…SWFF), 2141–2181 (VNLN…PVNM), and 2226–2328 (NLFV…MPFY). Position 2054 is a phosphothreonine (Thr-2054). Residues Ser-2056, Ser-2073, and Ser-2083 each carry the phosphoserine modification. Over residues 2087-2106 (ETKRPGQAAKKETKEPKKGE) the composition is skewed to basic and acidic residues. Residues 2106 to 2357 (ESWFFRWLPG…IGQRKHLVLN (252 aa)) are required for interaction with SEC23A. Phosphoserine occurs at positions 2271 and 2291. Composition is skewed to low complexity over residues 2289 to 2302 (ELSRCSSMSSLSRE) and 2310 to 2324 (APGDLPAAGGPPSGA).

Belongs to the SEC16 family. In terms of assembly, SEC16A and SEC16B are each present in multiple copies in a heteromeric complex. Interacts with SEC23A. Interacts with RNF183 and RNF152. Interacts with LRRK2 (via ROC domain). Interacts with SEC13. Interacts with RAB10. Interacts with MIA3. Interacts with GORASP2 in response to ER stress. As to expression, ubiquitous. Expressed at higher levels in the pancreas.

The protein resides in the endoplasmic reticulum membrane. Its subcellular location is the golgi apparatus membrane. It localises to the cytoplasm. It is found in the perinuclear region. The protein localises to the cytosol. The protein resides in the microsome membrane. Functionally, acts as a molecular scaffold that plays a key role in the organization of the endoplasmic reticulum exit sites (ERES), also known as transitional endoplasmic reticulum (tER). SAR1A-GTP-dependent assembly of SEC16A on the ER membrane forms an organized scaffold defining an ERES. Required for secretory cargo traffic from the endoplasmic reticulum to the Golgi apparatus. Mediates the recruitment of MIA3/TANGO to ERES. Regulates both conventional (ER/Golgi-dependent) and GORASP2-mediated unconventional (ER/Golgi-independent) trafficking of CFTR to cell membrane. Positively regulates the protein stability of E3 ubiquitin-protein ligases RNF152 and RNF183 and the ER localization of RNF183. Acts as a RAB10 effector in the regulation of insulin-induced SLC2A4/GLUT4 glucose transporter-enriched vesicles delivery to the cell membrane in adipocytes. In Homo sapiens (Human), this protein is Protein transport protein Sec16A (SEC16A).